The sequence spans 232 residues: MTEHTDFELLELATPYALNAVSDDERADIDRRVAAAPSPVAAAFNDEVRAVRETMAVVSAATTAEPPAHLRTAILDATKPEVRRQSRWRTAAFASAAAIAVGLGAFGLGVLTRPSPPPTVAEQVLTAPDVRTVSRPLGAGTATVVFSRDRNTGLLVMNNVAPPSRGTVYQMWLLGGAKGPRSAGTMGTAAVTPSTTATLTDLGASTALAFTVEPGTGSPQPTGTILAELPLG.

Topologically, residues 1-90 are cytoplasmic; the sequence is MTEHTDFELL…EVRRQSRWRT (90 aa). The chain crosses the membrane as a helical span at residues 91 to 111; sequence AAFASAAAIAVGLGAFGLGVL. At 112 to 232 the chain is on the extracellular side; that stretch reads TRPSPPPTVA…GTILAELPLG (121 aa).

This sequence belongs to the anti-sigma-K factor family.

The protein resides in the cell membrane. Functionally, an anti-sigma factor for extracytoplasmic function (ECF) sigma factor SigK. ECF sigma factors are held in an inactive form by an anti-sigma factor until released by regulated intramembrane proteolysis (RIP). RIP occurs when an extracytoplasmic signal triggers a concerted proteolytic cascade to transmit information and elicit cellular responses. The membrane-spanning regulatory substrate protein is first cut extracytoplasmically (site-1 protease, S1P), then within the membrane itself (site-2 protease, S2P, Rip1), while cytoplasmic proteases finish degrading the regulatory protein, liberating the sigma factor. This Mycobacterium tuberculosis (strain ATCC 25177 / H37Ra) protein is Anti-sigma-K factor RskA (rskA).